The following is a 709-amino-acid chain: Dual specificity calcium/calmodulin-dependent 3',5'-cyclic nucleotide phosphodiesterase 1C (709 aa).

Methionine 1 carries the post-translational modification N-acetylmethionine. The calmodulin-binding stretch occupies residues 123-146 (EKPRFKSIVHAVQAGIFVERMYRR). Residues 151–528 (VGLSYPPAVI…ERWRAKVPKE (378 aa)) form the PDEase domain. The Proton donor role is filled by histidine 228. Residues histidine 232, histidine 268, aspartate 269, and aspartate 376 each contribute to the Zn(2+) site. A Mg(2+)-binding site is contributed by aspartate 269. Disordered regions lie at residues 453-495 (LIDE…APIN) and 523-650 (AKVP…TCRL). Positions 483–495 (VKTSGSEGSAPIN) are enriched in polar residues. Basic and acidic residues predominate over residues 523-556 (AKVPKEEKAKKEAEEKARLAAEEQQKEMEAKSQA). Over residues 571–581 (ETKNQVNGTRA) the composition is skewed to polar residues. 2 stretches are compositionally biased toward basic and acidic residues: residues 582–598 (NKSD…EKSS) and 606–633 (DFKD…DGTK).

It belongs to the cyclic nucleotide phosphodiesterase family. PDE1 subfamily. In terms of assembly, homodimer. The cofactor is Zn(2+). Requires Mg(2+) as cofactor. Isoform PDE1C2 is present in the heart and brain and, at lower levels in the lung, liver, kidney and skeletal muscle. Isoform PDE1C1 is expressed in the heart and brain and, at lower levels in lung. Also expressed at low levels in uterus and testis.

The protein resides in the lysosome. The enzyme catalyses a nucleoside 3',5'-cyclic phosphate + H2O = a nucleoside 5'-phosphate + H(+). It catalyses the reaction 3',5'-cyclic GMP + H2O = GMP + H(+). It carries out the reaction 3',5'-cyclic AMP + H2O = AMP + H(+). Its activity is regulated as follows. Type I PDE are activated by the binding of calmodulin in the presence of Ca(2+). Its function is as follows. Calmodulin-dependent cyclic nucleotide phosphodiesterase with a dual specificity for the second messengers cAMP and cGMP, which are key regulators of many important physiological processes. Has a high affinity for both cAMP and cGMP. Modulates the amplitude and duration of the cAMP signal in sensory cilia in response to odorant stimulation, hence contributing to the generation of action potentials. Regulates smooth muscle cell proliferation. Regulates the stability of growth factor receptors, including PDGFRB. This chain is Dual specificity calcium/calmodulin-dependent 3',5'-cyclic nucleotide phosphodiesterase 1C, found in Homo sapiens (Human).